We begin with the raw amino-acid sequence, 186 residues long: Testis-expressed protein 36 (186 aa).

Residues 1-52 are disordered; that stretch reads MTKGRRFNPPSDKDGRWFPHIGLTQKTPESITSATSKEPQSPHLPRQAEGKL. Polar residues predominate over residues 24-39; it reads TQKTPESITSATSKEP.

This chain is Testis-expressed protein 36 (TEX36), found in Homo sapiens (Human).